We begin with the raw amino-acid sequence, 860 residues long: Leucine--tRNA ligase (860 aa).

Residues 42 to 52 (PYPSGRLHMGH) carry the 'HIGH' region motif. A 'KMSKS' region motif is present at residues 619-623 (KMSKS). An ATP-binding site is contributed by Lys622.

This sequence belongs to the class-I aminoacyl-tRNA synthetase family.

Its subcellular location is the cytoplasm. It carries out the reaction tRNA(Leu) + L-leucine + ATP = L-leucyl-tRNA(Leu) + AMP + diphosphate. In Klebsiella pneumoniae subsp. pneumoniae (strain ATCC 700721 / MGH 78578), this protein is Leucine--tRNA ligase.